The chain runs to 289 residues: tRNA dimethylallyltransferase (289 aa).

Residue 9–16 coordinates ATP; sequence GTTASGKT. Residue 11-16 coordinates substrate; the sequence is TASGKT. The segment at 34-37 is interaction with substrate tRNA; sequence DSLC.

This sequence belongs to the IPP transferase family. Monomer. Requires Mg(2+) as cofactor.

It catalyses the reaction adenosine(37) in tRNA + dimethylallyl diphosphate = N(6)-dimethylallyladenosine(37) in tRNA + diphosphate. In terms of biological role, catalyzes the transfer of a dimethylallyl group onto the adenine at position 37 in tRNAs that read codons beginning with uridine, leading to the formation of N6-(dimethylallyl)adenosine (i(6)A). This chain is tRNA dimethylallyltransferase, found in Campylobacter jejuni subsp. jejuni serotype O:23/36 (strain 81-176).